Consider the following 497-residue polypeptide: Glycerol kinase (497 aa).

Threonine 12 contacts ADP. ATP contacts are provided by threonine 12, threonine 13, and serine 14. Threonine 12 provides a ligand contact to sn-glycerol 3-phosphate. Arginine 16 is an ADP binding site. Sn-glycerol 3-phosphate contacts are provided by arginine 82, glutamate 83, tyrosine 134, and aspartate 243. Residues arginine 82, glutamate 83, tyrosine 134, aspartate 243, and glutamine 244 each contribute to the glycerol site. Threonine 265 and glycine 308 together coordinate ADP. Positions 265, 308, 312, and 409 each coordinate ATP. 2 residues coordinate ADP: glycine 409 and asparagine 413.

The protein belongs to the FGGY kinase family. As to quaternary structure, homotetramer and homodimer (in equilibrium).

The catalysed reaction is glycerol + ATP = sn-glycerol 3-phosphate + ADP + H(+). It participates in polyol metabolism; glycerol degradation via glycerol kinase pathway; sn-glycerol 3-phosphate from glycerol: step 1/1. With respect to regulation, activated by phosphorylation and inhibited by fructose 1,6-bisphosphate (FBP). Key enzyme in the regulation of glycerol uptake and metabolism. Catalyzes the phosphorylation of glycerol to yield sn-glycerol 3-phosphate. The polypeptide is Glycerol kinase (Thermoanaerobacter pseudethanolicus (strain ATCC 33223 / 39E) (Clostridium thermohydrosulfuricum)).